The sequence spans 182 residues: ATP-dependent protease subunit HslV (182 aa).

Thr-12 is a catalytic residue. Residues Ala-167, Cys-170, and Thr-173 each coordinate Na(+).

This sequence belongs to the peptidase T1B family. HslV subfamily. In terms of assembly, a double ring-shaped homohexamer of HslV is capped on each side by a ring-shaped HslU homohexamer. The assembly of the HslU/HslV complex is dependent on binding of ATP.

It localises to the cytoplasm. The enzyme catalyses ATP-dependent cleavage of peptide bonds with broad specificity.. With respect to regulation, allosterically activated by HslU binding. Protease subunit of a proteasome-like degradation complex believed to be a general protein degrading machinery. This Pelodictyon phaeoclathratiforme (strain DSM 5477 / BU-1) protein is ATP-dependent protease subunit HslV.